The sequence spans 505 residues: 2,3-bisphosphoglycerate-independent phosphoglycerate mutase (505 aa).

The Mn(2+) site is built by Asp-12 and Ser-62. The Phosphoserine intermediate role is filled by Ser-62. Residues His-123, 153–154 (RD), Arg-185, Arg-191, 257–260 (RPDR), and Lys-330 each bind substrate. Positions 397, 401, 438, 439, and 456 each coordinate Mn(2+).

This sequence belongs to the BPG-independent phosphoglycerate mutase family. In terms of assembly, monomer. Mn(2+) serves as cofactor.

It catalyses the reaction (2R)-2-phosphoglycerate = (2R)-3-phosphoglycerate. Its pathway is carbohydrate degradation; glycolysis; pyruvate from D-glyceraldehyde 3-phosphate: step 3/5. Functionally, catalyzes the interconversion of 2-phosphoglycerate and 3-phosphoglycerate. In Staphylococcus saprophyticus subsp. saprophyticus (strain ATCC 15305 / DSM 20229 / NCIMB 8711 / NCTC 7292 / S-41), this protein is 2,3-bisphosphoglycerate-independent phosphoglycerate mutase.